A 1715-amino-acid polypeptide reads, in one-letter code: Pentafunctional AROM polypeptide (1715 aa).

The span at 1–17 shows a compositional bias: polar residues; that stretch reads MTSTASAQQPVLRTKTP. Positions 1-26 are disordered; sequence MTSTASAQQPVLRTKTPSYHAPPSTD. The 3-dehydroquinate synthase stretch occupies residues 1-421; sequence MTSTASAQQP…VQNMASTVSD (421 aa). NAD(+) contacts are provided by residues 71–73, 112–115, 143–145, and aspartate 148; these read DQN, EASK, and GGV. A 7-phospho-2-dehydro-3-deoxy-D-arabino-heptonate-binding site is contributed by arginine 159. Residue 168–169 coordinates NAD(+); that stretch reads TT. Aspartate 175 and lysine 181 together coordinate 7-phospho-2-dehydro-3-deoxy-D-arabino-heptonate. Lysine 190 is a binding site for NAD(+). Residue asparagine 191 coordinates 7-phospho-2-dehydro-3-deoxy-D-arabino-heptonate. Residues 208–211 and asparagine 219 each bind NAD(+); that span reads WLKT. Glutamate 223 contacts Zn(2+). 7-phospho-2-dehydro-3-deoxy-D-arabino-heptonate-binding positions include 223 to 226 and lysine 287; that span reads EVVK. The active-site Proton acceptor; for 3-dehydroquinate synthase activity is the glutamate 297. 7-phospho-2-dehydro-3-deoxy-D-arabino-heptonate is bound by residues 301–305 and histidine 308; that span reads RNLVN. Residue histidine 308 coordinates Zn(2+). Catalysis depends on histidine 312, which acts as the Proton acceptor; for 3-dehydroquinate synthase activity. Residues histidine 324 and lysine 393 each contribute to the 7-phospho-2-dehydro-3-deoxy-D-arabino-heptonate site. Histidine 324 serves as a coordination point for Zn(2+). Residues 434–895 form an EPSP synthase region; that stretch reads VTPIHEQPNK…WDDLERKLGI (462 aa). The active-site For EPSP synthase activity is cysteine 877. A shikimate kinase region spans residues 948–1165; the sequence is HATIICIGMR…KGGRRTYFLS (218 aa). Residue 955–962 coordinates ATP; sequence GMRASGKT. Residues 1166–1389 are 3-dehydroquinase; it reads LTFPDVVPKL…AAPGQLSFRQ (224 aa). The active-site Proton acceptor; for 3-dehydroquinate dehydratase activity is the histidine 1292. Residue lysine 1320 is the Schiff-base intermediate with substrate; for 3-dehydroquinate dehydratase activity of the active site. A shikimate dehydrogenase region spans residues 1402–1715; the sequence is ARRFALFGSP…AAWDVYLQRC (314 aa).

In the N-terminal section; belongs to the sugar phosphate cyclases superfamily. Dehydroquinate synthase family. It in the 2nd section; belongs to the EPSP synthase family. This sequence in the 3rd section; belongs to the shikimate kinase family. The protein in the 4th section; belongs to the type-I 3-dehydroquinase family. In the C-terminal section; belongs to the shikimate dehydrogenase family. As to quaternary structure, homodimer. Zn(2+) serves as cofactor.

It is found in the cytoplasm. It catalyses the reaction 7-phospho-2-dehydro-3-deoxy-D-arabino-heptonate = 3-dehydroquinate + phosphate. The catalysed reaction is 3-dehydroquinate = 3-dehydroshikimate + H2O. It carries out the reaction shikimate + NADP(+) = 3-dehydroshikimate + NADPH + H(+). The enzyme catalyses shikimate + ATP = 3-phosphoshikimate + ADP + H(+). It catalyses the reaction 3-phosphoshikimate + phosphoenolpyruvate = 5-O-(1-carboxyvinyl)-3-phosphoshikimate + phosphate. The protein operates within metabolic intermediate biosynthesis; chorismate biosynthesis; chorismate from D-erythrose 4-phosphate and phosphoenolpyruvate: step 2/7. It participates in metabolic intermediate biosynthesis; chorismate biosynthesis; chorismate from D-erythrose 4-phosphate and phosphoenolpyruvate: step 3/7. Its pathway is metabolic intermediate biosynthesis; chorismate biosynthesis; chorismate from D-erythrose 4-phosphate and phosphoenolpyruvate: step 4/7. It functions in the pathway metabolic intermediate biosynthesis; chorismate biosynthesis; chorismate from D-erythrose 4-phosphate and phosphoenolpyruvate: step 5/7. The protein operates within metabolic intermediate biosynthesis; chorismate biosynthesis; chorismate from D-erythrose 4-phosphate and phosphoenolpyruvate: step 6/7. The AROM polypeptide catalyzes 5 consecutive enzymatic reactions in prechorismate polyaromatic amino acid biosynthesis. The polypeptide is Pentafunctional AROM polypeptide (Mycosarcoma maydis (Corn smut fungus)).